A 142-amino-acid polypeptide reads, in one-letter code: METKLVLALIACGVICLLQTTPTEATGKHVQQLMKVFRAIDFDFTKKAFYLHRAKYGVQNQLRNPLYLKAMSLPRSAKLSQPCLKKMIDEVNDLESTFYAGFSFNCHDHDQYSMDCLEAAEPTYLDGLKKLAASTEQCLVQK.

Positions 1 to 25 are cleaved as a signal peptide; sequence METKLVLALIACGVICLLQTTPTEA. 2 disulfide bridges follow: Cys-83/Cys-138 and Cys-106/Cys-116.

As to quaternary structure, interacts with host coagulation factor XII (F12) (inactive and activated). Interacts with host high molecular weight kininogen (KNG1) (inactive and activated).

The protein localises to the secreted. With respect to regulation, zn(2+) modulates binding to host coagulation factor XII (F12) and high molecular weight kininogen (KNG1). Functionally, salivary protein with anticoagulant activity. Inhibits activation of host kallikrein-kinin system by preventing the reciprocal activation of coagulation factor XII (F12) and prekallikrein (KLKB1), and subsequent release of bradykinin. Inhibits host factor XII and high molecular weight kininogen (KNG1) binding to negatively charged surfaces. Weakly inhibits the alternative pathway of complement system activation in the host. This Anopheles stephensi (Indo-Pakistan malaria mosquito) protein is gSG7 salivary protein.